Here is a 639-residue protein sequence, read N- to C-terminus: NADP-dependent malic enzyme, chloroplastic (639 aa).

A chloroplast-targeting transit peptide spans 1 to 49; the sequence is MLSARAAATAAAAAASPLWKRGEGGSSGSGSGCTSCREVRRRAAAVRVR. A disordered region spans residues 15-34; that stretch reads ASPLWKRGEGGSSGSGSGCT. The active-site Proton donor is Tyr187. Residue Arg240 participates in NAD(+) binding. Lys258 (proton acceptor) is an active-site residue. The a divalent metal cation site is built by Glu330, Asp331, and Asp354. Asp354 is an NAD(+) binding site. 383 to 399 serves as a coordination point for NADP(+); sequence LFLGAGEAGTGIAELIA. Residue Asn495 coordinates NAD(+).

It belongs to the malic enzymes family. As to quaternary structure, homotetramer. It depends on Mg(2+) as a cofactor. The cofactor is Mn(2+).

It is found in the plastid. It localises to the chloroplast. The enzyme catalyses (S)-malate + NADP(+) = pyruvate + CO2 + NADPH. It catalyses the reaction oxaloacetate + H(+) = pyruvate + CO2. It participates in photosynthesis; C4 acid pathway. In terms of biological role, the chloroplastic ME isoform decarboxylates malate shuttled from neighboring mesophyll cells. The CO(2) released is then refixed by ribulose-bisphosphate carboxylase. This pathway eliminates the photorespiratory loss of CO(2) that occurs in most plants. The sequence is that of NADP-dependent malic enzyme, chloroplastic (ME6) from Oryza sativa subsp. japonica (Rice).